A 254-amino-acid chain; its full sequence is NFU1 iron-sulfur cluster scaffold homolog, mitochondrial (254 aa).

A mitochondrion-targeting transit peptide spans 1–9 (MAATARRGW). The interval 173 to 241 (IKELLDTRIR…IPEVEGVEQV (69 aa)) is nifU. Residues cysteine 210 and cysteine 213 each coordinate [4Fe-4S] cluster.

The protein belongs to the NifU family. Monomer and homohexamer; the apo-NFU1 is a monomer, while the holo-NFU1 is a hexamer composed of a trimer of dimer that is probably linked by some 4Fe-4S cluster. Interacts with HIRA and EPM2A/laforin. Interacts with BOLA3. Interacts with HSPA9. As to expression, ubiquitous. Expression in adult lung is weak compared to fetal lung.

Its subcellular location is the mitochondrion. The protein localises to the cytoplasm. It localises to the cytosol. Its function is as follows. Iron-sulfur cluster scaffold protein which can assemble [4Fe-4S] clusters and deliver them to target proteins. The chain is NFU1 iron-sulfur cluster scaffold homolog, mitochondrial (NFU1) from Homo sapiens (Human).